Here is a 444-residue protein sequence, read N- to C-terminus: Xylose isomerase (444 aa).

Positions 307 and 309 each coordinate Mg(2+).

This sequence belongs to the xylose isomerase family. Homotetramer. Mg(2+) serves as cofactor.

It is found in the cytoplasm. It carries out the reaction alpha-D-xylose = alpha-D-xylulofuranose. This is Xylose isomerase from Thermotoga neapolitana (strain ATCC 49049 / DSM 4359 / NBRC 107923 / NS-E).